The primary structure comprises 691 residues: DNA ligase (691 aa).

NAD(+) is bound by residues Asp-41–Asp-45, Ser-90–Leu-91, and Glu-130. Catalysis depends on Lys-132, which acts as the N6-AMP-lysine intermediate. 4 residues coordinate NAD(+): Arg-153, Glu-190, Lys-307, and Lys-331. Residues Cys-425, Cys-428, Cys-443, and Cys-449 each contribute to the Zn(2+) site. The region spanning Ala-610–Arg-691 is the BRCT domain.

Belongs to the NAD-dependent DNA ligase family. LigA subfamily. Mg(2+) serves as cofactor. It depends on Mn(2+) as a cofactor.

The catalysed reaction is NAD(+) + (deoxyribonucleotide)n-3'-hydroxyl + 5'-phospho-(deoxyribonucleotide)m = (deoxyribonucleotide)n+m + AMP + beta-nicotinamide D-nucleotide.. In terms of biological role, DNA ligase that catalyzes the formation of phosphodiester linkages between 5'-phosphoryl and 3'-hydroxyl groups in double-stranded DNA using NAD as a coenzyme and as the energy source for the reaction. It is essential for DNA replication and repair of damaged DNA. The protein is DNA ligase of Burkholderia multivorans (strain ATCC 17616 / 249).